A 157-amino-acid polypeptide reads, in one-letter code: 2-C-methyl-D-erythritol 2,4-cyclodiphosphate synthase (157 aa).

A divalent metal cation contacts are provided by Asp-8 and His-10. 4-CDP-2-C-methyl-D-erythritol 2-phosphate is bound by residues 8 to 10 (DIH) and 34 to 35 (HS). His-42 serves as a coordination point for a divalent metal cation. Residues 56–58 (DIG) and 132–135 (TTNE) each bind 4-CDP-2-C-methyl-D-erythritol 2-phosphate.

It belongs to the IspF family. In terms of assembly, homotrimer. The cofactor is a divalent metal cation.

The enzyme catalyses 4-CDP-2-C-methyl-D-erythritol 2-phosphate = 2-C-methyl-D-erythritol 2,4-cyclic diphosphate + CMP. The protein operates within isoprenoid biosynthesis; isopentenyl diphosphate biosynthesis via DXP pathway; isopentenyl diphosphate from 1-deoxy-D-xylulose 5-phosphate: step 4/6. Involved in the biosynthesis of isopentenyl diphosphate (IPP) and dimethylallyl diphosphate (DMAPP), two major building blocks of isoprenoid compounds. Catalyzes the conversion of 4-diphosphocytidyl-2-C-methyl-D-erythritol 2-phosphate (CDP-ME2P) to 2-C-methyl-D-erythritol 2,4-cyclodiphosphate (ME-CPP) with a corresponding release of cytidine 5-monophosphate (CMP). This chain is 2-C-methyl-D-erythritol 2,4-cyclodiphosphate synthase, found in Synechococcus sp. (strain JA-3-3Ab) (Cyanobacteria bacterium Yellowstone A-Prime).